Consider the following 271-residue polypeptide: Ribonuclease 3 (271 aa).

Residues 5 to 139 enclose the RNase III domain; that stretch reads PALLELKLDY…IMAAIYLDGG (135 aa). Position 52 (Glu52) interacts with Mg(2+). Asp56 is a catalytic residue. Mg(2+) is bound by residues Asp125 and Glu128. Residue Glu128 is part of the active site. The DRBM domain occupies 172–241; the sequence is NFKSALQELA…ARGLYERLMG (70 aa). The tract at residues 241–271 is disordered; it reads GDPIVPLPDDSPGDSPDDSGDAAESGVISAT. The span at 251-261 shows a compositional bias: acidic residues; that stretch reads SPGDSPDDSGD.

The protein belongs to the ribonuclease III family. As to quaternary structure, homodimer. Mg(2+) serves as cofactor.

The protein resides in the cytoplasm. It carries out the reaction Endonucleolytic cleavage to 5'-phosphomonoester.. In terms of biological role, digests double-stranded RNA. Involved in the processing of primary rRNA transcript to yield the immediate precursors to the large and small rRNAs (23S and 16S). Processes some mRNAs, and tRNAs when they are encoded in the rRNA operon. Processes pre-crRNA and tracrRNA of type II CRISPR loci if present in the organism. The polypeptide is Ribonuclease 3 (Solibacter usitatus (strain Ellin6076)).